Here is a 638-residue protein sequence, read N- to C-terminus: Stress-activated protein kinase alpha (638 aa).

6 ANK repeats span residues 43-72 (YGQS…TLKA), 80-109 (NGFS…NVDV), 113-146 (DLNT…NVNA), 150-181 (NGET…NVNL), 185-214 (FQES…DVDC), and 219-248 (ERKT…LFDW). In terms of domain architecture, SAM spans 240 to 303 (KKYKDLFDWL…LKETSNLANE (64 aa)). One can recognise a Protein kinase domain in the interval 351–620 (LEYTEKLGAG…RLVTIENEYR (270 aa)). ATP is bound by residues 357-365 (LGAGSSGKV) and lysine 378. Catalysis depends on aspartate 472, which acts as the Proton acceptor.

This sequence belongs to the protein kinase superfamily. TKL Ser/Thr protein kinase family. In terms of assembly, interacts with F-actin. Autophosphorylated.

It is found in the cytoplasm. The protein resides in the cytoskeleton. The catalysed reaction is L-seryl-[protein] + ATP = O-phospho-L-seryl-[protein] + ADP + H(+). It catalyses the reaction L-threonyl-[protein] + ATP = O-phospho-L-threonyl-[protein] + ADP + H(+). In terms of biological role, may be involved in cortical F-actin organization and resistance to osmotic stress. Activated upon cell detachment, in vitro. This is Stress-activated protein kinase alpha (spkA-1) from Dictyostelium discoideum (Social amoeba).